The following is a 117-amino-acid chain: Small ribosomal subunit protein bS16 (117 aa).

Residues 81–90 (LKKRPNRNNP) are compositionally biased toward basic residues. The segment at 81-117 (LKKRPNRNNPHKGQPGKKAQERISAAKQVAEAESAPV) is disordered.

This sequence belongs to the bacterial ribosomal protein bS16 family.

In Bartonella quintana (strain Toulouse) (Rochalimaea quintana), this protein is Small ribosomal subunit protein bS16.